Here is a 183-residue protein sequence, read N- to C-terminus: Protein AC4 (183 aa).

It belongs to the geminiviridae protein AC4/C4 family.

Its function is as follows. Pathogenicity determinant. May act as a suppressor of RNA-mediated gene silencing, also known as post-transcriptional gene silencing (PTGS), a mechanism of plant viral defense that limits the accumulation of viral RNAs. This chain is Protein AC4, found in African cassava mosaic virus (isolate West Kenyan 844) (ACMV).